A 440-amino-acid polypeptide reads, in one-letter code: Tumor necrosis factor receptor superfamily member 10B (440 aa).

Disordered regions lie at residues 1-32 (MEQR…RPGP) and 60-84 (DLAP…CPPG). Residues 1-55 (MEQRGQNAPAASGARKRHGPGPREARGARPGPRVPKTLVLVVAAVLLLVSAESAL) form the signal peptide. At 56–210 (ITQQDLAPQQ…SPGTPASPCS (155 aa)) the chain is on the extracellular side. TNFR-Cys repeat units lie at residues 57 to 94 (TQQD…GRDC), 97 to 137 (CKYG…NTVC), and 138 to 178 (QCEE…DIEC). Residues 60-71 (DLAPQQRAAPQQ) are compositionally biased toward low complexity. Disulfide bonds link Cys81–Cys94, Cys97–Cys113, Cys116–Cys129, Cys119–Cys137, Cys139–Cys153, Cys156–Cys170, and Cys160–Cys178. A TAPE repeat occupies 192–206 (PAVEETVTSSPGTPA). The chain crosses the membrane as a helical span at residues 211-231 (LSGIIIGVTVAAVVLIVAVFV). Topologically, residues 232-440 (CKSLLWKKVL…LEGNADSAMS (209 aa)) are cytoplasmic. A Death domain is found at 339–422 (RQCFDDFADL…LAKQKIEDHL (84 aa)).

In terms of assembly, monomer. Can interact with TRADD and RIPK1. Interacts with HCMV protein UL141; this interaction prevents TNFRSF10B cell surface expression. Two TNFRSF10B monomers interact with a UL141 homodimer. Three TNFRSF10B molecules interact with TNFSF10 homotrimer. In the absence of stimulation, interacts with BIRC2, DDX3X and GSK3B. The interaction with BIRC2 and DDX3X is further enhanced upon receptor stimulation and accompanied by DDX3X and BIRC2 cleavage. Post-translationally, (Microbial infection) Glycosylated on Arg residue by S.typhimurium protein Ssek3. In terms of tissue distribution, widely expressed in adult and fetal tissues; very highly expressed in tumor cell lines such as HeLaS3, K-562, HL-60, SW480, A-549 and G-361; highly expressed in heart, peripheral blood lymphocytes, liver, pancreas, spleen, thymus, prostate, ovary, uterus, placenta, testis, esophagus, stomach and throughout the intestinal tract; not detectable in brain.

It localises to the membrane. Functionally, receptor for the cytotoxic ligand TNFSF10/TRAIL. The adapter molecule FADD recruits caspase-8 to the activated receptor. The resulting death-inducing signaling complex (DISC) performs caspase-8 proteolytic activation which initiates the subsequent cascade of caspases (aspartate-specific cysteine proteases) mediating apoptosis. Promotes the activation of NF-kappa-B. Essential for ER stress-induced apoptosis. In Homo sapiens (Human), this protein is Tumor necrosis factor receptor superfamily member 10B (TNFRSF10B).